The primary structure comprises 117 residues: Eukaryotic translation initiation factor 4E-binding protein 1 (117 aa).

2 stretches are compositionally biased toward polar residues: residues 1–12 and 33–47; these read MSAGSSCSQTPS and YSTTPGGTLFSTTPG. The interval 1-47 is disordered; it reads MSAGSSCSQTPSRAIPTRRVALGDGVQLPPGDYSTTPGGTLFSTTPG. S2 bears the N-acetylserine mark. T36 and T40 each carry phosphothreonine. S43 is subject to Phosphoserine. A phosphothreonine mark is found at T45 and T49. The residue at position 53 (Y53) is a Phosphotyrosine. The YXXXXLphi motif signature appears at 53-59; the sequence is YDRKFLM. Residue K56 forms a Glycyl lysine isopeptide (Lys-Gly) (interchain with G-Cter in ubiquitin) linkage. Phosphoserine is present on S64. The interval 64–117 is disordered; the sequence is SPVAKTPPKDLPAIPGVTSPTSDEPPMQASQSQLPSSPEDKRAGGEESQFEMDI. At T69 the chain carries Phosphothreonine. The segment covering 81 to 99 has biased composition (polar residues); that stretch reads TSPTSDEPPMQASQSQLPS. Phosphoserine occurs at positions 82, 95, 99, 100, and 111. A TOS motif motif is present at residues 113–117; it reads FEMDI.

The protein belongs to the eIF4E-binding protein family. As to quaternary structure, hypophosphorylated EIF4EBP1 competes with EIF4G1/EIF4G3 to interact with EIF4E; insulin stimulated MAP-kinase (MAPK1 and MAPK3) or mTORC1 phosphorylation of EIF4EBP1 causes dissociation of the complex allowing EIF4G1/EIF4G3 to bind and consequent initiation of translation. Interacts (via TOS motif) with RPTOR; promoting phosphorylation by mTORC1. Phosphorylated on serine and threonine residues in response to insulin, EGF and PDGF. Phosphorylation at Thr-36, Thr-45, Ser-64 and Thr-69, corresponding to the hyperphosphorylated form, is regulated by mTORC1 and abolishes binding to EIF4E. Post-translationally, ubiquitinated: when eIF4E levels are low, hypophosphorylated form is ubiquitinated by the BCR(KLHL25) complex, leading to its degradation and serving as a homeostatic mechanism to maintain translation and prevent eIF4E inhibition when eIF4E levels are low. Not ubiquitinated when hyperphosphorylated (at Thr-36, Thr-45, Ser-64 and Thr-69) or associated with eIF4E. In terms of tissue distribution, highest expression in fat cells.

It localises to the cytoplasm. The protein localises to the nucleus. Functionally, repressor of translation initiation that regulates EIF4E activity by preventing its assembly into the eIF4F complex: hypophosphorylated form competes with EIF4G1/EIF4G3 and strongly binds to EIF4E, leading to repress translation. In contrast, hyperphosphorylated form dissociates from EIF4E, allowing interaction between EIF4G1/EIF4G3 and EIF4E, leading to initiation of translation. Mediates the regulation of protein translation by hormones, growth factors and other stimuli that signal through the MAP kinase and mTORC1 pathways. This Mus musculus (Mouse) protein is Eukaryotic translation initiation factor 4E-binding protein 1 (Eif4ebp1).